The sequence spans 501 residues: L-arabinose isomerase (501 aa).

Residues Glu306, Glu333, His350, and His450 each coordinate Mn(2+).

This sequence belongs to the arabinose isomerase family. In terms of assembly, homohexamer. Mn(2+) is required as a cofactor.

It catalyses the reaction beta-L-arabinopyranose = L-ribulose. The protein operates within carbohydrate degradation; L-arabinose degradation via L-ribulose; D-xylulose 5-phosphate from L-arabinose (bacterial route): step 1/3. Its function is as follows. Catalyzes the conversion of L-arabinose to L-ribulose. This is L-arabinose isomerase from Serratia proteamaculans (strain 568).